A 242-amino-acid chain; its full sequence is Probable 2-phosphosulfolactate phosphatase (242 aa).

Belongs to the ComB family. Mg(2+) is required as a cofactor.

The enzyme catalyses (2R)-O-phospho-3-sulfolactate + H2O = (2R)-3-sulfolactate + phosphate. The sequence is that of Probable 2-phosphosulfolactate phosphatase from Synechococcus sp. (strain JA-2-3B'a(2-13)) (Cyanobacteria bacterium Yellowstone B-Prime).